A 763-amino-acid polypeptide reads, in one-letter code: Photosystem I P700 chlorophyll a apoprotein A1 (763 aa).

The next 8 membrane-spanning stretches (helical) occupy residues 72 to 95 (IFSAHFGHLAVIFIWLSGAYFHGA), 158 to 181 (LYVTAIGALVMAGLMLFAGWFHYH), 197 to 221 (LNHHLAGLLGLGSLSWAGHQIHVSL), 305 to 323 (TAHHHLAIAVLFIVAGHMY), 360 to 383 (WHAQLSINLAILGSISIIVAHHMY), 399 to 425 (LSLFTHHIWIGGFLIVGAGAHAAIFMV), 447 to 469 (AIISHLNWVCIWLGFHSFGLYIH), and 544 to 562 (FMVHHIHAFTIHVTALILL). Residues Cys-586 and Cys-595 each coordinate [4Fe-4S] cluster. 2 consecutive transmembrane segments (helical) span residues 602 to 623 (HVFLGLFWMYNSLSIVIFHYSW) and 677 to 699 (TSAYGLLFLGAHFVWAFSLMFLF). His-688 contributes to the chlorophyll a' binding site. Residues Met-696 and Tyr-704 each coordinate chlorophyll a. Trp-705 is a phylloquinone binding site. The helical transmembrane segment at 737–757 (AVGVAHYLLGGIVTTWSFFLA) threads the bilayer.

This sequence belongs to the PsaA/PsaB family. In terms of assembly, the PsaA/B heterodimer binds the P700 chlorophyll special pair and subsequent electron acceptors. PSI consists of a core antenna complex that captures photons, and an electron transfer chain that converts photonic excitation into a charge separation. The cyanobacterial PSI reaction center is composed of one copy each of PsaA,B,C,D,E,F,I,J,K,L,M and X, and forms trimeric complexes. It depends on PSI electron transfer chain: 5 chlorophyll a, 1 chlorophyll a', 2 phylloquinones and 3 4Fe-4S clusters. PSI core antenna: 90 chlorophyll a, 22 carotenoids, 3 phospholipids and 1 galactolipid. P700 is a chlorophyll a/chlorophyll a' dimer, A0 is one or more chlorophyll a, A1 is one or both phylloquinones and FX is a shared 4Fe-4S iron-sulfur center. as a cofactor.

The protein localises to the cellular thylakoid membrane. It catalyses the reaction reduced [plastocyanin] + hnu + oxidized [2Fe-2S]-[ferredoxin] = oxidized [plastocyanin] + reduced [2Fe-2S]-[ferredoxin]. Functionally, psaA and PsaB bind P700, the primary electron donor of photosystem I (PSI), as well as the electron acceptors A0, A1 and FX. PSI is a plastocyanin/cytochrome c6-ferredoxin oxidoreductase, converting photonic excitation into a charge separation, which transfers an electron from the donor P700 chlorophyll pair to the spectroscopically characterized acceptors A0, A1, FX, FA and FB in turn. Oxidized P700 is reduced on the lumenal side of the thylakoid membrane by plastocyanin or cytochrome c6. This is Photosystem I P700 chlorophyll a apoprotein A1 from Synechococcus elongatus (strain ATCC 33912 / PCC 7942 / FACHB-805) (Anacystis nidulans R2).